Reading from the N-terminus, the 277-residue chain is Multiple sugar-binding transport system permease protein MsmG (277 aa).

6 helical membrane-spanning segments follow: residues 13–33, 74–94, 110–130, 141–161, 198–218, and 243–263; these read YVLLTVGGILILIPLMVTVFS, VITVLSVLVVMLFIPAAAYSI, LLILGIFVPFQVIMIPITVMM, LIILYLTYAIPQTLFLYVGYI, TTLIINALWFWNDFMLPLLIL, and GPSFASYIVGIITITIVYLIF. The region spanning 69 to 263 is the ABC transmembrane type-1 domain; sequence FWNSTVITVL…ITITIVYLIF (195 aa).

Belongs to the binding-protein-dependent transport system permease family. MalFG subfamily.

It is found in the cell membrane. Involved in a binding protein-dependent transport system responsible for the uptake of melibiose, raffinose and isomaltotriose. The polypeptide is Multiple sugar-binding transport system permease protein MsmG (msmG) (Streptococcus mutans serotype c (strain ATCC 700610 / UA159)).